The sequence spans 240 residues: MDLFSVRMRAQKNGKHVSGAERIVKKEELETAVKELLNRPKEFDFMNVKVEKVKDFEVVKFNLKISTYSFKSPEEAREFAVKKLTQEGIKEEVAKKAVEILSKGANPKGGNMRGAVLMDIETGERLEEDKERGVRTIHFDWKDRKKVTEKLLKEGYTLRTVDALALTFKNLFCGVVAELCWSDDPDYVTGYVSGKEIGYVRITPLKEKGDPLGGRVYFVSRKELSEIIECLTQKVVLIEL.

This sequence belongs to the BioW family. In terms of assembly, homodimer. Mg(2+) serves as cofactor.

The enzyme catalyses heptanedioate + ATP + CoA = 6-carboxyhexanoyl-CoA + AMP + diphosphate. The protein operates within metabolic intermediate metabolism; pimeloyl-CoA biosynthesis; pimeloyl-CoA from pimelate: step 1/1. Its function is as follows. Catalyzes the transformation of pimelate into pimeloyl-CoA with concomitant hydrolysis of ATP to AMP. The sequence is that of 6-carboxyhexanoate--CoA ligase from Aquifex aeolicus (strain VF5).